The sequence spans 270 residues: Putative phosphoenolpyruvate synthase regulatory protein (270 aa).

Residue 149-156 (GVSRSGKT) participates in ADP binding.

This sequence belongs to the pyruvate, phosphate/water dikinase regulatory protein family. PSRP subfamily.

It carries out the reaction [pyruvate, water dikinase] + ADP = [pyruvate, water dikinase]-phosphate + AMP + H(+). The catalysed reaction is [pyruvate, water dikinase]-phosphate + phosphate + H(+) = [pyruvate, water dikinase] + diphosphate. In terms of biological role, bifunctional serine/threonine kinase and phosphorylase involved in the regulation of the phosphoenolpyruvate synthase (PEPS) by catalyzing its phosphorylation/dephosphorylation. The sequence is that of Putative phosphoenolpyruvate synthase regulatory protein from Pseudoalteromonas atlantica (strain T6c / ATCC BAA-1087).